We begin with the raw amino-acid sequence, 646 residues long: Tyrosine-protein kinase MasK (646 aa).

Residues 1 to 415 (MSPPQTTLPV…PTAGGRRWRT (415 aa)) are Periplasmic-facing. A Protein kinase domain is found at 25–300 (YVLVRKLAEG…AFADALETFL (276 aa)). ATP-binding positions include 31-39 (LAEGGMAEI) and lysine 57. Aspartate 163 functions as the Proton acceptor in the catalytic mechanism. Positions 373 to 410 (TSAQRPGMSMRPSSPGVPAHGAASRGSTSPESAPTAGG) are disordered. The chain crosses the membrane as a helical span at residues 416–433 (LAVGLAGGLMLAAAGIVG). Residues 434-646 (YRQWMTTPAS…VMPFSWRVTQ (213 aa)) lie on the Cytoplasmic side of the membrane. The disordered stretch occupies residues 521–547 (AGAASDVEAEADEEGADAAPVRSKKAS). The span at 527-536 (VEAEADEEGA) shows a compositional bias: acidic residues.

This sequence belongs to the protein kinase superfamily. Tyr protein kinase family. Interacts with MglA. Post-translationally, autophosphorylated.

The protein localises to the cell inner membrane. The enzyme catalyses L-tyrosyl-[protein] + ATP = O-phospho-L-tyrosyl-[protein] + ADP + H(+). Essential for growth. Interacts with MglA to control social gliding motility. This is Tyrosine-protein kinase MasK (masK) from Myxococcus xanthus (strain DK1622).